The primary structure comprises 257 residues: MALAKRIIPCLDVTAGRVVKGVNFVELRDAGDPVEIARRYDAQGADELTFLDITATSDGRDLILPIIEAVASQVFIPLTVGGGVRAVEDVRRLLNAGADKVSMNSSAVANPPLVRDAADKYGSQCIVVAIDAKRVSADGEPPRWEVFTHGGRKGTGLDAVEWARKMAELGAGEILLTSMDRDGTKAGFDLALTRAVSDAVPVPVIASGGVGSLEHLAAGITEGHADAVLAASIFHYGEHTVGEAKRFMAERGIAVRL.

Active-site residues include aspartate 12 and aspartate 131.

The protein belongs to the HisA/HisF family. Heterodimer of HisH and HisF.

It is found in the cytoplasm. It catalyses the reaction 5-[(5-phospho-1-deoxy-D-ribulos-1-ylimino)methylamino]-1-(5-phospho-beta-D-ribosyl)imidazole-4-carboxamide + L-glutamine = D-erythro-1-(imidazol-4-yl)glycerol 3-phosphate + 5-amino-1-(5-phospho-beta-D-ribosyl)imidazole-4-carboxamide + L-glutamate + H(+). It functions in the pathway amino-acid biosynthesis; L-histidine biosynthesis; L-histidine from 5-phospho-alpha-D-ribose 1-diphosphate: step 5/9. Functionally, IGPS catalyzes the conversion of PRFAR and glutamine to IGP, AICAR and glutamate. The HisF subunit catalyzes the cyclization activity that produces IGP and AICAR from PRFAR using the ammonia provided by the HisH subunit. This is Imidazole glycerol phosphate synthase subunit HisF from Burkholderia pseudomallei (strain 1106a).